We begin with the raw amino-acid sequence, 348 residues long: Protein pelota homolog (348 aa).

It belongs to the eukaryotic release factor 1 family. Pelota subfamily. Monomer. A divalent metal cation serves as cofactor.

The protein localises to the cytoplasm. May function in recognizing stalled ribosomes, interact with stem-loop structures in stalled mRNA molecules, and effect endonucleolytic cleavage of the mRNA. May play a role in the release non-functional ribosomes and degradation of damaged mRNAs. Has endoribonuclease activity. The chain is Protein pelota homolog from Methanococcus maripaludis (strain DSM 14266 / JCM 13030 / NBRC 101832 / S2 / LL).